The sequence spans 348 residues: Bifunctional nitrilase/nitrile hydratase NIT4B (348 aa).

The CN hydrolase domain occupies 29-300 (VRATVVQAST…EALISADLDL (272 aa)). Catalysis depends on Glu69, which acts as the Proton acceptor. The Proton donor role is filled by Lys156. Cys190 acts as the Nucleophile in catalysis.

Belongs to the carbon-nitrogen hydrolase superfamily. Nitrilase family. In terms of tissue distribution, expressed in roots, stems, cotyledons, leaves and flowers.

The catalysed reaction is a nitrile + 2 H2O = a carboxylate + NH4(+). It catalyses the reaction 3-cyano-L-alanine + 2 H2O = L-aspartate + NH4(+). In terms of biological role, highly specific for beta-cyano-L-alanine (Ala(CN)). Low activity with 3-phenylpropionitrile (PPN). Not associated with auxin production but may be involved in cyanide detoxification. The polypeptide is Bifunctional nitrilase/nitrile hydratase NIT4B (NIT4B) (Nicotiana tabacum (Common tobacco)).